Here is a 143-residue protein sequence, read N- to C-terminus: NADH-quinone oxidoreductase subunit A (143 aa).

The next 3 helical transmembrane spans lie at 8-28, 63-83, and 93-113; these read FGNV…GYLT, FYVV…LFPW, and FALI…VYAW.

The protein belongs to the complex I subunit 3 family. In terms of assembly, NDH-1 is composed of 14 different subunits. Subunits NuoA, H, J, K, L, M, N constitute the membrane sector of the complex.

The protein resides in the cell inner membrane. The catalysed reaction is a quinone + NADH + 5 H(+)(in) = a quinol + NAD(+) + 4 H(+)(out). Functionally, NDH-1 shuttles electrons from NADH, via FMN and iron-sulfur (Fe-S) centers, to quinones in the respiratory chain. The immediate electron acceptor for the enzyme in this species is believed to be a menaquinone. Couples the redox reaction to proton translocation (for every two electrons transferred, four hydrogen ions are translocated across the cytoplasmic membrane), and thus conserves the redox energy in a proton gradient. The chain is NADH-quinone oxidoreductase subunit A from Chlorobium luteolum (strain DSM 273 / BCRC 81028 / 2530) (Pelodictyon luteolum).